Consider the following 80-residue polypeptide: MGRRRVKRRINIPKRQSRLEKRFNCPVCNHENVVQCTVKKTLMKGFANCSVCEASFACDANKLTTGIDVYSAWVDECCKR.

Zn(2+) is bound by residues cysteine 25, cysteine 28, cysteine 49, and cysteine 52.

It belongs to the ELOF1 family.

Its subcellular location is the nucleus. Functionally, transcription elongation factor implicated in the maintenance of proper chromatin structure in actively transcribed regions. This Encephalitozoon cuniculi (strain GB-M1) (Microsporidian parasite) protein is Transcription elongation factor 1 homolog.